Here is a 403-residue protein sequence, read N- to C-terminus: 8-amino-7-oxononanoate synthase (403 aa).

R25 provides a ligand contact to substrate. Residue 112–113 coordinates pyridoxal 5'-phosphate; sequence GY. Residue H137 participates in substrate binding. The pyridoxal 5'-phosphate site is built by S182, H210, and T239. K242 carries the N6-(pyridoxal phosphate)lysine modification. T358 contacts substrate.

The protein belongs to the class-II pyridoxal-phosphate-dependent aminotransferase family. BioF subfamily. Homodimer. The cofactor is pyridoxal 5'-phosphate.

The catalysed reaction is 6-carboxyhexanoyl-[ACP] + L-alanine + H(+) = (8S)-8-amino-7-oxononanoate + holo-[ACP] + CO2. The protein operates within cofactor biosynthesis; biotin biosynthesis. Functionally, catalyzes the decarboxylative condensation of pimeloyl-[acyl-carrier protein] and L-alanine to produce 8-amino-7-oxononanoate (AON), [acyl-carrier protein], and carbon dioxide. This chain is 8-amino-7-oxononanoate synthase, found in Marinomonas sp. (strain MWYL1).